Consider the following 247-residue polypeptide: Proteasome subunit alpha type-7 (247 aa).

Belongs to the peptidase T1A family. In terms of assembly, the 26S proteasome consists of a 20S proteasome core and two 19S regulatory subunits. The 20S proteasome core is composed of 28 subunits that are arranged in four stacked rings, resulting in a barrel-shaped structure. The two end rings are each formed by seven alpha subunits, and the two central rings are each formed by seven beta subunits. The catalytic chamber with the active sites is on the inside of the barrel.

It localises to the cytoplasm. It is found in the nucleus. Functionally, the proteasome is a multicatalytic proteinase complex which is characterized by its ability to cleave peptides with Arg, Phe, Tyr, Leu, and Glu adjacent to the leaving group at neutral or slightly basic pH. The proteasome has an ATP-dependent proteolytic activity. In Trypanosoma brucei brucei, this protein is Proteasome subunit alpha type-7 (PSA4).